A 124-amino-acid chain; its full sequence is Galanin peptides (124 aa).

The N-terminal stretch at Met1–Ser19 is a signal peptide. Residues Ala20–Glu30 constitute a propeptide that is removed on maturation. Thr61 carries the threonine amide modification. 2 positions are modified to phosphoserine: Ser117 and Ser118.

Belongs to the galanin family. As to expression, expressed in retinal progenitor cells and retinal ganglion cells (at protein level).

It localises to the secreted. Endocrine hormone of the central and peripheral nervous systems that binds and activates the G protein-coupled receptors GALR1, GALR2, and GALR3. This small neuropeptide may regulate diverse physiologic functions including contraction of smooth muscle of the gastrointestinal and genitourinary tract, growth hormone and insulin release and adrenal secretion. The protein is Galanin peptides (Gal) of Mus musculus (Mouse).